Consider the following 322-residue polypeptide: Ferredoxin--NADP reductase (322 aa).

FAD-binding residues include Asp-34, Gln-42, Tyr-47, Val-87, Phe-120, Asp-279, and Thr-320.

The protein belongs to the ferredoxin--NADP reductase type 2 family. In terms of assembly, homodimer. FAD is required as a cofactor.

The catalysed reaction is 2 reduced [2Fe-2S]-[ferredoxin] + NADP(+) + H(+) = 2 oxidized [2Fe-2S]-[ferredoxin] + NADPH. This chain is Ferredoxin--NADP reductase, found in Streptococcus pneumoniae (strain Hungary19A-6).